A 364-amino-acid chain; its full sequence is Aminomethyltransferase (364 aa).

This sequence belongs to the GcvT family. In terms of assembly, the glycine cleavage system is composed of four proteins: P, T, L and H.

The catalysed reaction is N(6)-[(R)-S(8)-aminomethyldihydrolipoyl]-L-lysyl-[protein] + (6S)-5,6,7,8-tetrahydrofolate = N(6)-[(R)-dihydrolipoyl]-L-lysyl-[protein] + (6R)-5,10-methylene-5,6,7,8-tetrahydrofolate + NH4(+). Functionally, the glycine cleavage system catalyzes the degradation of glycine. The sequence is that of Aminomethyltransferase from Shigella boydii serotype 18 (strain CDC 3083-94 / BS512).